Reading from the N-terminus, the 186-residue chain is Calcium load-activated calcium channel homolog (186 aa).

At 1 to 6 (MLGDCL) the chain is on the cytoplasmic side. The chain crosses the membrane as a helical span at residues 7–27 (LIIAIAFGTALAGEGITWLLV). Over 28–87 (YRSDHYKRLKADMDKKTKKLEKKKQEVGDTNDKNIKRKLEREEERLKATNRDMSMFKMKS) the chain is Lumenal. Residues 30–86 (SDHYKRLKADMDKKTKKLEKKKQEVGDTNDKNIKRKLEREEERLKATNRDMSMFKMK) are a coiled coil. The helical transmembrane segment at 88–108 (MFAIGLAFTALLSTFNSIFEG) threads the bilayer. The Cytoplasmic portion of the chain corresponds to 109-134 (RVVAKLPFYPIGFIQGLSHRNLIGED). The pore-forming intramembrane region spans 135 to 151 (MTDCSFIFLYILCTMTV). Residues 152–186 (RQNLQKILGFAPSRAMARQQSSPWAPPNSQMNYLR) are Cytoplasmic-facing.

The protein belongs to the TMCO1 family. In terms of assembly, homodimer and homotetramer.

The protein localises to the endoplasmic reticulum membrane. In terms of biological role, calcium-selective channel required to prevent calcium stores from overfilling. The sequence is that of Calcium load-activated calcium channel homolog from Caenorhabditis elegans.